The primary structure comprises 110 residues: Large ribosomal subunit protein uL22 (110 aa).

Belongs to the universal ribosomal protein uL22 family. Part of the 50S ribosomal subunit.

In terms of biological role, this protein binds specifically to 23S rRNA; its binding is stimulated by other ribosomal proteins, e.g. L4, L17, and L20. It is important during the early stages of 50S assembly. It makes multiple contacts with different domains of the 23S rRNA in the assembled 50S subunit and ribosome. Its function is as follows. The globular domain of the protein is located near the polypeptide exit tunnel on the outside of the subunit, while an extended beta-hairpin is found that lines the wall of the exit tunnel in the center of the 70S ribosome. This is Large ribosomal subunit protein uL22 from Janthinobacterium sp. (strain Marseille) (Minibacterium massiliensis).